A 403-amino-acid chain; its full sequence is Anti-sigma-I factor RsgI8 (403 aa).

Residues 1–59 (MTKQKGTILKLKNNLAIIMTSDCKIVSIKRQPGMYEGLEISFNKNEIINKKNKLAFYSR) are Cytoplasmic-facing. In terms of domain architecture, RsgI N-terminal anti-sigma spans 4 to 51 (QKGTILKLKNNLAIIMTSDCKIVSIKRQPGMYEGLEISFNKNEIINKK). The helical transmembrane segment at 60 to 80 (IAAGIAAIFIIMVISFNLFNN) threads the bilayer. Residues 81-403 (NDVYAYVAID…KAKNSIEKMP (323 aa)) are Extracellular-facing. 3 stretches are compositionally biased toward basic and acidic residues: residues 254-314 (VHNV…EPAK), 324-335 (LPKDKTIPEEKT), and 349-403 (VEPK…EKMP). Residues 254–403 (VHNVKKEEPK…KAKNSIEKMP (150 aa)) are disordered.

As to quaternary structure, interacts (via RsgI N-terminal anti-sigma domain) with SigI8.

It is found in the cell membrane. Its function is as follows. Anti-sigma factor for SigI8. Negatively regulates SigI8 activity through direct interaction. The chain is Anti-sigma-I factor RsgI8 from Acetivibrio thermocellus (strain ATCC 27405 / DSM 1237 / JCM 9322 / NBRC 103400 / NCIMB 10682 / NRRL B-4536 / VPI 7372) (Clostridium thermocellum).